Consider the following 232-residue polypeptide: Ribonuclease 3 (232 aa).

An RNase III domain is found at 5 to 134; the sequence is NDAISKIIDY…LIGAIYIDGG (130 aa). Glu47 is a binding site for Mg(2+). Residue Asp51 is part of the active site. Mg(2+)-binding residues include Asn120 and Glu123. Glu123 is a catalytic residue. The DRBM domain occupies 159 to 228; the sequence is DPKTSLQEWT…AELMLEKIGK (70 aa).

This sequence belongs to the ribonuclease III family. Homodimer. Mg(2+) serves as cofactor.

It localises to the cytoplasm. The catalysed reaction is Endonucleolytic cleavage to 5'-phosphomonoester.. In terms of biological role, digests double-stranded RNA. Involved in the processing of primary rRNA transcript to yield the immediate precursors to the large and small rRNAs (23S and 16S). Processes some mRNAs, and tRNAs when they are encoded in the rRNA operon. Processes pre-crRNA and tracrRNA of type II CRISPR loci if present in the organism. This is Ribonuclease 3 from Wolbachia pipientis wMel.